The primary structure comprises 259 residues: Small ribosomal subunit protein uS2 (259 aa).

Positions 224–259 (GKQGEDDQQVAPAEDVAEEVSDESLQDLKNSVEGND) are disordered. Acidic residues predominate over residues 238 to 248 (DVAEEVSDESL). A compositionally biased stretch (polar residues) spans 250 to 259 (DLKNSVEGND).

Belongs to the universal ribosomal protein uS2 family.

The polypeptide is Small ribosomal subunit protein uS2 (Limosilactobacillus fermentum (strain NBRC 3956 / LMG 18251) (Lactobacillus fermentum)).